The following is a 110-amino-acid chain: Small ubiquitin-related modifier 3 (110 aa).

Residues Lys5 and Lys7 each participate in a glycyl lysine isopeptide (Lys-Gly) (interchain with G-Cter in SUMO2) cross-link. A Glycyl lysine isopeptide (Lys-Gly) (interchain with G-Cter in SUMO); alternate cross-link involves residue Lys11. A Glycyl lysine isopeptide (Lys-Gly) (interchain with G-Cter in SUMO2); alternate cross-link involves residue Lys11. Positions 15 to 92 (DHINLKVAGQ…IDVFQQQTGG (78 aa)) constitute a Ubiquitin-like domain. The span at 88 to 101 (QQTGGSASRGSVPT) shows a compositional bias: polar residues. The interval 88 to 110 (QQTGGSASRGSVPTPNRCPDLCY) is disordered. Residue Gly92 forms a Glycyl lysine isopeptide (Gly-Lys) (interchain with K-? in acceptor proteins) linkage. The propeptide occupies 93–110 (SASRGSVPTPNRCPDLCY).

This sequence belongs to the ubiquitin family. SUMO subfamily. Interacts with SAE2 and UBE2I. Covalently attached to a number of proteins. Interacts with USP25 (via ts SIM domain); the interaction sumoylates USP25 and inhibits its ubiquitin hydrolyzing activity. Interacts with BMAL1. Polymeric chains can be formed through Lys-11 cross-linking. Post-translationally, cleavage of precursor form by SENP1, SENP2 or SENP5 is necessary for function.

The protein localises to the cytoplasm. Its subcellular location is the nucleus. It localises to the PML body. In terms of biological role, ubiquitin-like protein which can be covalently attached to target lysines either as a monomer or as a lysine-linked polymer. Does not seem to be involved in protein degradation and may function as an antagonist of ubiquitin in the degradation process. Plays a role in a number of cellular processes such as nuclear transport, DNA replication and repair, mitosis and signal transduction. Covalent attachment to its substrates requires prior activation by the E1 complex SAE1-SAE2 and linkage to the E2 enzyme UBE2I, and can be promoted by an E3 ligase such as PIAS1-4, RANBP2 or CBX4. Plays a role in the regulation of sumoylation status of SETX. The sequence is that of Small ubiquitin-related modifier 3 from Mus musculus (Mouse).